Consider the following 428-residue polypeptide: Gamma-glutamyl phosphate reductase (428 aa).

The protein belongs to the gamma-glutamyl phosphate reductase family.

Its subcellular location is the cytoplasm. It carries out the reaction L-glutamate 5-semialdehyde + phosphate + NADP(+) = L-glutamyl 5-phosphate + NADPH + H(+). The protein operates within amino-acid biosynthesis; L-proline biosynthesis; L-glutamate 5-semialdehyde from L-glutamate: step 2/2. Functionally, catalyzes the NADPH-dependent reduction of L-glutamate 5-phosphate into L-glutamate 5-semialdehyde and phosphate. The product spontaneously undergoes cyclization to form 1-pyrroline-5-carboxylate. The protein is Gamma-glutamyl phosphate reductase of Chelativorans sp. (strain BNC1).